Here is a 264-residue protein sequence, read N- to C-terminus: Phosphonates import ATP-binding protein PhnC (264 aa).

The ABC transporter domain occupies 3-246 (IRLQEAGLRH…MLDALYANEQ (244 aa)). 35–42 (GPSGAGKS) lines the ATP pocket.

This sequence belongs to the ABC transporter superfamily. Phosphonates importer (TC 3.A.1.9.1) family. As to quaternary structure, the complex is composed of two ATP-binding proteins (PhnC), two transmembrane proteins (PhnE) and a solute-binding protein (PhnD).

Its subcellular location is the cell inner membrane. The catalysed reaction is phosphonate(out) + ATP + H2O = phosphonate(in) + ADP + phosphate + H(+). Part of the ABC transporter complex PhnCDE involved in phosphonates import. Responsible for energy coupling to the transport system. This Pseudomonas entomophila (strain L48) protein is Phosphonates import ATP-binding protein PhnC.